We begin with the raw amino-acid sequence, 379 residues long: Inactive deoxyhypusine synthase (379 aa).

The segment at 1–48 (MLASVPAPRPAKKDSAASRRKSASKSTGAAVKDGSSARVSASGAAESP) is disordered. Residues 36-47 (SARVSASGAAES) show a composition bias toward low complexity. NAD(+)-binding positions include 115-119 (SNMIS), 141-143 (SAG), glutamate 147, and aspartate 256. 146–147 (EE) is a binding site for spermidine. Residue aspartate 261 coordinates spermidine. Residue glycine 302 coordinates NAD(+). A spermidine-binding site is contributed by histidine 307. 323-324 (TG) contacts NAD(+). Residues 329–331 (GCV) and 338–344 (DDVACGL) each bind spermidine. 357–358 (DA) contributes to the NAD(+) binding site.

Belongs to the deoxyhypusine synthase family.

This chain is Inactive deoxyhypusine synthase, found in Leishmania donovani.